A 249-amino-acid chain; its full sequence is General transcription factor IIF subunit 2 (249 aa).

Residue alanine 2 is modified to N-acetylalanine. 3 positions are modified to N6-acetyllysine: lysine 22, lysine 33, and lysine 137. Serine 142 is modified (phosphoserine). Glycine 227 and histidine 229 together coordinate DNA. Serine 248 carries the phosphoserine modification.

The protein belongs to the TFIIF beta subunit family. Heterodimer of an alpha and a beta subunit. Interacts with HTATSF1 and GPBP1. Interacts with URI1. Interacts with GTF2B (via N-terminus); this interaction is inhibited in presence of GTF2F1. Part of TBP-based Pol II pre-initiation complex (PIC), in which Pol II core assembles with general transcription factors and other specific initiation factors including GTF2E1, GTF2E2, GTF2F1, GTF2F2, TCEA1, ERCC2, ERCC3, GTF2H2, GTF2H3, GTF2H4, GTF2H5, GTF2A1, GTF2A2, GTF2B and TBP; this large multi-subunit PIC complex mediates DNA unwinding and targets Pol II core to the transcription start site where the first phosphodiester bond forms.

Its subcellular location is the nucleus. TFIIF is a general transcription initiation factor that binds to RNA polymerase II and helps to recruit it to the initiation complex in collaboration with TFIIB. It promotes transcription elongation. The sequence is that of General transcription factor IIF subunit 2 (Gtf2f2) from Rattus norvegicus (Rat).